The chain runs to 329 residues: Prostaglandin reductase 1 (329 aa).

Residue Thr-18 is modified to Phosphothreonine. A Phosphoserine modification is found at Ser-20. NADP(+) contacts are provided by residues 152-155 (GAVG), Lys-178, Tyr-193, Asn-217, 239-245 (CGAISQY), 270-272 (FIV), and Asn-321. The residue at position 178 (Lys-178) is an N6-(2-hydroxyisobutyryl)lysine; alternate. N6-acetyllysine; alternate is present on Lys-178.

This sequence belongs to the NADP-dependent oxidoreductase L4BD family. Monomer or homodimer.

It localises to the cytoplasm. The catalysed reaction is 13,14-dihydro-15-oxo-prostaglandin E1 + NADP(+) = 15-oxoprostaglandin E1 + NADPH + H(+). It carries out the reaction 13,14-dihydro-15-oxo-prostaglandin E2 + NADP(+) = 15-oxoprostaglandin E2 + NADPH + H(+). The enzyme catalyses 13,14-dihydro-15-oxo-prostaglandin F1alpha + NADP(+) = 15-oxoprostaglandin F1alpha + NADPH + H(+). It catalyses the reaction 13,14-dihydro-15-oxo-PGF2alpha + NADP(+) = 15-oxoprostaglandin F2alpha + NADPH + H(+). The catalysed reaction is leukotriene B4 + NADP(+) = 12-oxo-leukotriene B4 + NADPH + H(+). It carries out the reaction 20-hydroxy-leukotriene B4 + NADP(+) = 12-oxo-20-hydroxy-leukotriene B4 + NADPH + H(+). The enzyme catalyses 6-trans-leukotriene B4 + NADP(+) = 12-oxo-(5S)-hydroxy-(6E,8E,10E,14Z)-eicosatetraenoate + NADPH + H(+). It catalyses the reaction (5S,12S)-dihydroxy-(6E,10E,12E,14Z)-eicosatetraenoate + NADP(+) = 12-oxo-(5S)-hydroxy-(6E,8E,10E,14Z)-eicosatetraenoate + NADPH + H(+). The catalysed reaction is an n-alkanal + NADP(+) = an alk-2-enal + NADPH + H(+). It carries out the reaction hexanal + NADP(+) = (E)-hex-2-enal + NADPH + H(+). The enzyme catalyses octanal + NADP(+) = (2E)-octenal + NADPH + H(+). It catalyses the reaction decanal + NADP(+) = (2E)-decenal + NADPH + H(+). The catalysed reaction is dodecanal + NADP(+) = (2E)-dodecenal + NADPH + H(+). It carries out the reaction 4-hydroxynonanal + NADP(+) = (E)-4-hydroxynon-2-enal + NADPH + H(+). The enzyme catalyses pentan-2-one + NADP(+) = (E)-pent-3-en-2-one + NADPH + H(+). It catalyses the reaction nonan-2-one + NADP(+) = (3E)-nonen-2-one + NADPH + H(+). In terms of biological role, NAD(P)H-dependent oxidoreductase involved in metabolic inactivation of pro- and anti-inflammatory eicosanoids: prostaglandins (PG), leukotrienes (LT) and lipoxins (LX). Catalyzes with high efficiency the reduction of the 13,14 double bond of 15-oxoPGs, including 15-oxo-PGE1, 15-oxo-PGE2, 15-oxo-PGF1-alpha and 15-oxo-PGF2-alpha. Catalyzes with lower efficiency the oxidation of the hydroxyl group at C12 of LTB4 and its derivatives, converting them into biologically less active 12-oxo-LTB4 metabolites. Reduces 15-oxo-LXA4 to 13,14 dihydro-15-oxo-LXA4, enhancing neutrophil recruitment at the inflammatory site. Plays a role in metabolic detoxification of alkenals and ketones. Reduces alpha,beta-unsaturated alkenals and ketones, particularly those with medium-chain length, showing highest affinity toward (2E)-decenal and (3E)-3-nonen-2-one. Inactivates 4-hydroxy-2-nonenal, a cytotoxic lipid constituent of oxidized low-density lipoprotein particles. The sequence is that of Prostaglandin reductase 1 (Ptgr1) from Rattus norvegicus (Rat).